The primary structure comprises 257 residues: Thiazole synthase (257 aa).

Catalysis depends on K100, which acts as the Schiff-base intermediate with DXP. 1-deoxy-D-xylulose 5-phosphate-binding positions include G161, 187–188, and 209–210; these read AG and NT.

It belongs to the ThiG family. In terms of assembly, homotetramer. Forms heterodimers with either ThiH or ThiS.

It is found in the cytoplasm. The catalysed reaction is [ThiS sulfur-carrier protein]-C-terminal-Gly-aminoethanethioate + 2-iminoacetate + 1-deoxy-D-xylulose 5-phosphate = [ThiS sulfur-carrier protein]-C-terminal Gly-Gly + 2-[(2R,5Z)-2-carboxy-4-methylthiazol-5(2H)-ylidene]ethyl phosphate + 2 H2O + H(+). It participates in cofactor biosynthesis; thiamine diphosphate biosynthesis. Its function is as follows. Catalyzes the rearrangement of 1-deoxy-D-xylulose 5-phosphate (DXP) to produce the thiazole phosphate moiety of thiamine. Sulfur is provided by the thiocarboxylate moiety of the carrier protein ThiS. In vitro, sulfur can be provided by H(2)S. The protein is Thiazole synthase of Zymomonas mobilis subsp. mobilis (strain ATCC 31821 / ZM4 / CP4).